The primary structure comprises 309 residues: Putative proline iminopeptidase (309 aa).

Positions 33 to 291 (LYVHGGPGSG…LYVTNNAGHS (259 aa)) constitute an AB hydrolase-1 domain. The Nucleophile role is filled by serine 105. Residue aspartate 262 is part of the active site. Histidine 290 serves as the catalytic Proton donor.

This sequence belongs to the peptidase S33 family.

It is found in the cytoplasm. It carries out the reaction Release of N-terminal proline from a peptide.. Its function is as follows. Specifically catalyzes the removal of N-terminal proline residues from peptides. The chain is Putative proline iminopeptidase (pip) from Mycoplasma pneumoniae (strain ATCC 29342 / M129 / Subtype 1) (Mycoplasmoides pneumoniae).